The following is a 251-amino-acid chain: SRR1-like protein (251 aa).

It belongs to the SRR1 family.

It localises to the cytoplasm. The protein localises to the nucleus. In Schizosaccharomyces pombe (strain 972 / ATCC 24843) (Fission yeast), this protein is SRR1-like protein.